An 863-amino-acid chain; its full sequence is Protein translocase subunit SecA (863 aa).

ATP is bound by residues Q88, 106–110, and D496; that span reads GEGKT. Residues 818–842 form a disordered region; the sequence is EVKTEPVITKKKPARNEPCPCGSGK. 4 residues coordinate Zn(2+): C836, C838, C847, and C848.

Belongs to the SecA family. As to quaternary structure, monomer and homodimer. Part of the essential Sec protein translocation apparatus which comprises SecA, SecYEG and auxiliary proteins SecDF-YajC and YidC. Requires Zn(2+) as cofactor.

It is found in the cell inner membrane. It localises to the cytoplasm. The enzyme catalyses ATP + H2O + cellular proteinSide 1 = ADP + phosphate + cellular proteinSide 2.. Functionally, part of the Sec protein translocase complex. Interacts with the SecYEG preprotein conducting channel. Has a central role in coupling the hydrolysis of ATP to the transfer of proteins into and across the cell membrane, serving as an ATP-driven molecular motor driving the stepwise translocation of polypeptide chains across the membrane. The chain is Protein translocase subunit SecA from Nitratiruptor sp. (strain SB155-2).